We begin with the raw amino-acid sequence, 538 residues long: Chaperonin GroEL 1 (538 aa).

Residues 29–32 (TLGP), 86–90 (DGTTT), glycine 413, and aspartate 494 contribute to the ATP site.

This sequence belongs to the chaperonin (HSP60) family. As to quaternary structure, forms a cylinder of 14 subunits composed of two heptameric rings stacked back-to-back. Interacts with the co-chaperonin GroES.

The protein localises to the cytoplasm. The catalysed reaction is ATP + H2O + a folded polypeptide = ADP + phosphate + an unfolded polypeptide.. Together with its co-chaperonin GroES, plays an essential role in assisting protein folding. The GroEL-GroES system forms a nano-cage that allows encapsulation of the non-native substrate proteins and provides a physical environment optimized to promote and accelerate protein folding. The polypeptide is Chaperonin GroEL 1 (Mycobacterium avium (strain 104)).